Consider the following 249-residue polypeptide: Hydroxyacylglutathione hydrolase (249 aa).

Residues histidine 54, histidine 56, aspartate 58, histidine 59, histidine 113, aspartate 138, and histidine 176 each contribute to the Zn(2+) site.

This sequence belongs to the metallo-beta-lactamase superfamily. Glyoxalase II family. In terms of assembly, monomer. The cofactor is Zn(2+).

It carries out the reaction an S-(2-hydroxyacyl)glutathione + H2O = a 2-hydroxy carboxylate + glutathione + H(+). The protein operates within secondary metabolite metabolism; methylglyoxal degradation; (R)-lactate from methylglyoxal: step 2/2. Functionally, thiolesterase that catalyzes the hydrolysis of S-D-lactoyl-glutathione to form glutathione and D-lactic acid. In Parasynechococcus marenigrum (strain WH8102), this protein is Hydroxyacylglutathione hydrolase.